Here is a 205-residue protein sequence, read N- to C-terminus: dITP/XTP pyrophosphatase (205 aa).

Position 11 to 16 (11 to 16) interacts with substrate; it reads TKNMGK. Mg(2+)-binding residues include glutamate 44 and aspartate 73. Residue aspartate 73 is the Proton acceptor of the active site. Substrate is bound by residues serine 74, 158–161, lysine 181, and 186–187; these read FGYD and HR.

This sequence belongs to the HAM1 NTPase family. Homodimer. Mg(2+) is required as a cofactor.

It catalyses the reaction XTP + H2O = XMP + diphosphate + H(+). The enzyme catalyses dITP + H2O = dIMP + diphosphate + H(+). The catalysed reaction is ITP + H2O = IMP + diphosphate + H(+). Pyrophosphatase that catalyzes the hydrolysis of nucleoside triphosphates to their monophosphate derivatives, with a high preference for the non-canonical purine nucleotides XTP (xanthosine triphosphate), dITP (deoxyinosine triphosphate) and ITP. Seems to function as a house-cleaning enzyme that removes non-canonical purine nucleotides from the nucleotide pool, thus preventing their incorporation into DNA/RNA and avoiding chromosomal lesions. In Bacillus cereus (strain ATCC 14579 / DSM 31 / CCUG 7414 / JCM 2152 / NBRC 15305 / NCIMB 9373 / NCTC 2599 / NRRL B-3711), this protein is dITP/XTP pyrophosphatase.